A 232-amino-acid polypeptide reads, in one-letter code: 2-C-methyl-D-erythritol 4-phosphate cytidylyltransferase (232 aa).

Belongs to the IspD/TarI cytidylyltransferase family. IspD subfamily.

The enzyme catalyses 2-C-methyl-D-erythritol 4-phosphate + CTP + H(+) = 4-CDP-2-C-methyl-D-erythritol + diphosphate. The protein operates within isoprenoid biosynthesis; isopentenyl diphosphate biosynthesis via DXP pathway; isopentenyl diphosphate from 1-deoxy-D-xylulose 5-phosphate: step 2/6. Its function is as follows. Catalyzes the formation of 4-diphosphocytidyl-2-C-methyl-D-erythritol from CTP and 2-C-methyl-D-erythritol 4-phosphate (MEP). This chain is 2-C-methyl-D-erythritol 4-phosphate cytidylyltransferase, found in Synechococcus sp. (strain ATCC 27144 / PCC 6301 / SAUG 1402/1) (Anacystis nidulans).